We begin with the raw amino-acid sequence, 427 residues long: uncharacterized protein (427 aa).

The stretch at 135-168 forms a coiled coil; it reads PILKQKLVSLESKVKKIDKEMEKHNDLLKEIQEN.

This is an uncharacterized protein from Arabidopsis thaliana (Mouse-ear cress).